Here is a 380-residue protein sequence, read N- to C-terminus: Protein trichome birefringence-like 38 (380 aa).

A helical; Signal-anchor for type II membrane protein membrane pass occupies residues 7 to 29; that stretch reads SLLLLFLPLLTVTILSGVEQAFA. The GDS motif motif lies at 134–136; sequence GDS. A DCXHWCLPGXXDXWN motif motif is present at residues 357–371; that stretch reads DCSHWCLPGLPDTWN.

It belongs to the PC-esterase family. TBL subfamily.

It localises to the membrane. Functionally, may act as a bridging protein that binds pectin and other cell wall polysaccharides. Probably involved in maintaining esterification of pectins. May be involved in the specific O-acetylation of cell wall polymers. The polypeptide is Protein trichome birefringence-like 38 (TBL38) (Arabidopsis thaliana (Mouse-ear cress)).